The sequence spans 298 residues: ATP synthase gamma chain (298 aa).

This sequence belongs to the ATPase gamma chain family. In terms of assembly, F-type ATPases have 2 components, CF(1) - the catalytic core - and CF(0) - the membrane proton channel. CF(1) has five subunits: alpha(3), beta(3), gamma(1), delta(1), epsilon(1). CF(0) has three main subunits: a, b and c.

Its subcellular location is the cell inner membrane. Its function is as follows. Produces ATP from ADP in the presence of a proton gradient across the membrane. The gamma chain is believed to be important in regulating ATPase activity and the flow of protons through the CF(0) complex. This Francisella tularensis subsp. holarctica (strain FTNF002-00 / FTA) protein is ATP synthase gamma chain.